The sequence spans 527 residues: MSLSQVSPLPHIKDVVLGDTVGQGAFACVKNAHLQMDPSIILAVKFIHVPTCKKMGLSDKDITKEVVLQSKCSKHPNVLRLIDCNVSKEYMWIILEMADGGDLFDKIEPDVGVDSDVAQFYFQQLVSAINYLHVECGVAHRDIKPENILLDKNGNLKLADFGLASQFRRKDGTLRVSMDQRGSPPYMAPEVLYSEEGYYADRTDIWSIGILLFVLLTGQTPWELPSLENEDFVFFIENDGNLNWGPWSKIEFTHLNLLRKILQPDPNKRVTLKALKLHPWVLRRASFSGDDGLCNDPELLAKKLFSHLKVSLSNENYLKFTQDTNSNNRYISTQPIGNELAELEHDSMHFQTVSNTQRAFTSYDSNTNYNSGTGMTQEAKWTQFISYDIAALQFHSDENDCNELVKRHLQFNPNKLTKFYTLQPMDVLLPILEKALNLSQIRVKPDLFANFERLCELLGYDNVFPLIINIKTKSNGGYQLCGSISIIKIEEELKSVGFERKTGDPLEWRRLFKKISTICRDIILIPN.

The Protein kinase domain occupies 15-281; it reads VVLGDTVGQG…LKALKLHPWV (267 aa). ATP-binding positions include 21 to 29 and K45; that span reads VGQGAFACV. D142 functions as the Proton acceptor in the catalytic mechanism.

This sequence belongs to the protein kinase superfamily. CAMK Ser/Thr protein kinase family. NIM1 subfamily.

The protein localises to the nucleus. It catalyses the reaction L-seryl-[protein] + ATP = O-phospho-L-seryl-[protein] + ADP + H(+). It carries out the reaction L-threonyl-[protein] + ATP = O-phospho-L-threonyl-[protein] + ADP + H(+). Functionally, serine/threonine-protein kinase which is required for checkpoint-mediated cell cycle arrest and activation of DNA repair in response to the presence of DNA damage or unreplicated DNA. May also negatively regulate cell cycle progression during unperturbed cell cycles. Controls phosphorylation and abundance of PDS1 to prevent anaphase entry. Also helps prevent mitotic exit. This is Serine/threonine-protein kinase CHK1 (CHK1) from Saccharomyces cerevisiae (strain ATCC 204508 / S288c) (Baker's yeast).